The following is a 642-amino-acid chain: Threonine--tRNA ligase (642 aa).

One can recognise a TGS domain in the interval 1-61 (MPVITLPDGS…ETDAELSIIT (61 aa)). Positions 243–534 (DHRKIGKQLD…LIEEYAGRFP (292 aa)) are catalytic. 3 residues coordinate Zn(2+): C334, H385, and H511.

This sequence belongs to the class-II aminoacyl-tRNA synthetase family. As to quaternary structure, homodimer. The cofactor is Zn(2+).

It localises to the cytoplasm. The enzyme catalyses tRNA(Thr) + L-threonine + ATP = L-threonyl-tRNA(Thr) + AMP + diphosphate + H(+). Functionally, catalyzes the attachment of threonine to tRNA(Thr) in a two-step reaction: L-threonine is first activated by ATP to form Thr-AMP and then transferred to the acceptor end of tRNA(Thr). Also edits incorrectly charged L-seryl-tRNA(Thr). The polypeptide is Threonine--tRNA ligase (Shewanella sp. (strain MR-7)).